The following is a 260-amino-acid chain: Imidazole glycerol phosphate synthase subunit HisF (260 aa).

Catalysis depends on residues D11 and D130.

This sequence belongs to the HisA/HisF family. As to quaternary structure, heterodimer of HisH and HisF.

Its subcellular location is the cytoplasm. The enzyme catalyses 5-[(5-phospho-1-deoxy-D-ribulos-1-ylimino)methylamino]-1-(5-phospho-beta-D-ribosyl)imidazole-4-carboxamide + L-glutamine = D-erythro-1-(imidazol-4-yl)glycerol 3-phosphate + 5-amino-1-(5-phospho-beta-D-ribosyl)imidazole-4-carboxamide + L-glutamate + H(+). It participates in amino-acid biosynthesis; L-histidine biosynthesis; L-histidine from 5-phospho-alpha-D-ribose 1-diphosphate: step 5/9. Its function is as follows. IGPS catalyzes the conversion of PRFAR and glutamine to IGP, AICAR and glutamate. The HisF subunit catalyzes the cyclization activity that produces IGP and AICAR from PRFAR using the ammonia provided by the HisH subunit. The chain is Imidazole glycerol phosphate synthase subunit HisF from Psychrobacter cryohalolentis (strain ATCC BAA-1226 / DSM 17306 / VKM B-2378 / K5).